A 399-amino-acid chain; its full sequence is Guanine nucleotide-binding protein G(f) subunit alpha (399 aa).

The 354-residue stretch at 46 to 399 (TTVKILLLGT…SENVSSMGLF (354 aa)) folds into the G-alpha domain. The interval 49–62 (KILLLGTAESGKTT) is G1 motif. GTP-binding positions include 54-61 (GTAESGKT), 188-194 (LHSRKIT), 221-225 (DVGGQ), 290-293 (NKYD), and alanine 371. The interval 186–194 (DILHSRKIT) is G2 motif. Threonine 194 is a binding site for Mg(2+). Residues 217–226 (FQMYDVGGQR) are G3 motif. Positions 286-293 (IVFLNKYD) are G4 motif. Residues 369 to 374 (TVATDT) form a G5 motif region.

This sequence belongs to the G-alpha family. In terms of assembly, g proteins are composed of 3 units; alpha, beta and gamma. The alpha chain contains the guanine nucleotide binding site. During embryogenesis, expressed primarily in the developing gut and transiently in the amnioserosa.

Guanine nucleotide-binding proteins (G proteins) are involved as modulators or transducers in various transmembrane signaling systems. The sequence is that of Guanine nucleotide-binding protein G(f) subunit alpha (Galphaf) from Drosophila melanogaster (Fruit fly).